A 242-amino-acid chain; its full sequence is Aquaporin (242 aa).

Topologically, residues 1–11 (MNTSTKLICQK) are cytoplasmic. The helical transmembrane segment at 12–32 (LFAEMLCSCIFGFAVYSAILN) threads the bilayer. Residues 33–39 (TKASNSS) lie on the Extracellular side of the membrane. Residues 40–60 (ISSTTVGLTVCFSSISLIYTF) traverse the membrane as a helical segment. At 61–83 (CDHSVAHFNPAITIAAICTGKLD) the chain is on the cytoplasmic side. The NPA motif lies at 69 to 71 (NPA). Residues 84–104 (ILLGIGYVIAQLIGFILATLL) form a helical membrane-spanning segment. Topologically, residues 105-133 (TVVCFPYGYLKTMEFIASARISDDISTVN) are extracellular. The helical transmembrane segment at 134 to 154 (LFFTEFILSFILVFIAFEVGI) threads the bilayer. Residues 155–175 (NAIREPGVTLFVGIKQIDRSK) lie on the Cytoplasmic side of the membrane. A helical transmembrane segment spans residues 176–196 (FAPLTIGITLGFLAFLASTTS). Residues 197–217 (GGAFNPGIVWGPAIMGGNFDD) lie on the Extracellular side of the membrane. The NPG motif lies at 201–203 (NPG). A helical membrane pass occupies residues 218-238 (FVIYIISELSGGLLGAFIQVF). Topologically, residues 239-242 (LLFK) are cytoplasmic.

The protein belongs to the MIP/aquaporin (TC 1.A.8) family.

Its subcellular location is the cell membrane. Functionally, water channel required to facilitate the transport of water across membranes. Involved in osmotolerance. This is Aquaporin (AQP) from Enterocytozoon bieneusi (strain H348) (Microsporidian parasite).